The following is a 375-amino-acid chain: Chaperone protein DnaJ (375 aa).

The region spanning 5–70 is the J domain; sequence DFYETLGVAK…QKRAAYDRYG (66 aa). The segment at 136 to 214 adopts a CR-type zinc-finger fold; that stretch reads GKTAQIRVPT…CHGQGRVTEE (79 aa). Positions 149, 152, 166, 169, 188, 191, 202, and 205 each coordinate Zn(2+). CXXCXGXG motif repeat units follow at residues 149–156, 166–173, 188–195, and 202–209; these read CDVCSGSG, CGTCQGTG, CPTCHGRG, and CPKCHGQG.

This sequence belongs to the DnaJ family. In terms of assembly, homodimer. Requires Zn(2+) as cofactor.

It localises to the cytoplasm. Its function is as follows. Participates actively in the response to hyperosmotic and heat shock by preventing the aggregation of stress-denatured proteins and by disaggregating proteins, also in an autonomous, DnaK-independent fashion. Unfolded proteins bind initially to DnaJ; upon interaction with the DnaJ-bound protein, DnaK hydrolyzes its bound ATP, resulting in the formation of a stable complex. GrpE releases ADP from DnaK; ATP binding to DnaK triggers the release of the substrate protein, thus completing the reaction cycle. Several rounds of ATP-dependent interactions between DnaJ, DnaK and GrpE are required for fully efficient folding. Also involved, together with DnaK and GrpE, in the DNA replication of plasmids through activation of initiation proteins. In Rhizobium johnstonii (strain DSM 114642 / LMG 32736 / 3841) (Rhizobium leguminosarum bv. viciae), this protein is Chaperone protein DnaJ.